The sequence spans 279 residues: Octanoyl-[GcvH]:protein N-octanoyltransferase (279 aa).

The 206-residue stretch at 48–253 folds into the BPL/LPL catalytic domain; sequence ETSPPVIRLW…TLEKLSDEIV (206 aa). Cysteine 152 functions as the Acyl-thioester intermediate in the catalytic mechanism.

The protein belongs to the octanoyltransferase LipL family.

It catalyses the reaction N(6)-octanoyl-L-lysyl-[glycine-cleavage complex H protein] + L-lysyl-[lipoyl-carrier protein] = N(6)-octanoyl-L-lysyl-[lipoyl-carrier protein] + L-lysyl-[glycine-cleavage complex H protein]. The protein operates within protein modification; protein lipoylation via endogenous pathway; protein N(6)-(lipoyl)lysine from octanoyl-[acyl-carrier-protein]. Catalyzes the amidotransfer (transamidation) of the octanoyl moiety from octanoyl-GcvH to the lipoyl domain of the E2 subunit of lipoate-dependent enzymes. This Oceanobacillus iheyensis (strain DSM 14371 / CIP 107618 / JCM 11309 / KCTC 3954 / HTE831) protein is Octanoyl-[GcvH]:protein N-octanoyltransferase.